A 242-amino-acid chain; its full sequence is Lactate utilization protein A 2 (242 aa).

The protein belongs to the LutA/YkgE family.

Functionally, is involved in L-lactate degradation and allows cells to grow with lactate as the sole carbon source. In Bacillus cereus (strain ZK / E33L), this protein is Lactate utilization protein A 2.